The primary structure comprises 225 residues: UPF0758 protein Swoo_4561 (225 aa).

Positions 102–224 (ILSDPDLTRD…IVSFAERGWI (123 aa)) constitute an MPN domain. 3 residues coordinate Zn(2+): histidine 173, histidine 175, and aspartate 186. Positions 173–186 (HNHPSGVAEPSHAD) match the JAMM motif motif.

Belongs to the UPF0758 family.

The polypeptide is UPF0758 protein Swoo_4561 (Shewanella woodyi (strain ATCC 51908 / MS32)).